The primary structure comprises 61 residues: MLNIFSLICICLNSALYSSNFFFAKLPEAYAFLNPIVDVMPVIPLFFFLLAFVWQAAVSFR.

Residues 1–24 (MLNIFSLICICLNSALYSSNFFFA) constitute a propeptide that is removed on maturation. Residues 40 to 60 (MPVIPLFFFLLAFVWQAAVSF) form a helical membrane-spanning segment.

Belongs to the PsbK family. As to quaternary structure, PSII is composed of 1 copy each of membrane proteins PsbA, PsbB, PsbC, PsbD, PsbE, PsbF, PsbH, PsbI, PsbJ, PsbK, PsbL, PsbM, PsbT, PsbX, PsbY, PsbZ, Psb30/Ycf12, at least 3 peripheral proteins of the oxygen-evolving complex and a large number of cofactors. It forms dimeric complexes.

The protein localises to the plastid. It is found in the chloroplast thylakoid membrane. Functionally, one of the components of the core complex of photosystem II (PSII). PSII is a light-driven water:plastoquinone oxidoreductase that uses light energy to abstract electrons from H(2)O, generating O(2) and a proton gradient subsequently used for ATP formation. It consists of a core antenna complex that captures photons, and an electron transfer chain that converts photonic excitation into a charge separation. The sequence is that of Photosystem II reaction center protein K from Vitis vinifera (Grape).